The chain runs to 57 residues: UPF0391 membrane protein RPC_3278 (57 aa).

2 consecutive transmembrane segments (helical) span residues Trp-4–Ala-24 and Ile-30–Leu-50.

Belongs to the UPF0391 family.

It is found in the cell membrane. The protein is UPF0391 membrane protein RPC_3278 of Rhodopseudomonas palustris (strain BisB18).